The sequence spans 535 residues: Bifunctional purine biosynthesis protein PurH (535 aa).

The region spanning 6-151 (TRLPIRRALI…KNHKDVAIVV (146 aa)) is the MGS-like domain.

Belongs to the PurH family.

The catalysed reaction is (6R)-10-formyltetrahydrofolate + 5-amino-1-(5-phospho-beta-D-ribosyl)imidazole-4-carboxamide = 5-formamido-1-(5-phospho-D-ribosyl)imidazole-4-carboxamide + (6S)-5,6,7,8-tetrahydrofolate. It catalyses the reaction IMP + H2O = 5-formamido-1-(5-phospho-D-ribosyl)imidazole-4-carboxamide. It participates in purine metabolism; IMP biosynthesis via de novo pathway; 5-formamido-1-(5-phospho-D-ribosyl)imidazole-4-carboxamide from 5-amino-1-(5-phospho-D-ribosyl)imidazole-4-carboxamide (10-formyl THF route): step 1/1. It functions in the pathway purine metabolism; IMP biosynthesis via de novo pathway; IMP from 5-formamido-1-(5-phospho-D-ribosyl)imidazole-4-carboxamide: step 1/1. This is Bifunctional purine biosynthesis protein PurH from Pseudomonas entomophila (strain L48).